We begin with the raw amino-acid sequence, 78 residues long: MTLFSSITSISKTNTSSKSSLNSFSGSSLSMGSNSVACGGCDKPAAGAAILANIDIKAKVDLSLSAAAAASAKCGACH.

Residues Met1–Met31 are disordered.

It belongs to the hssA/B family.

This is HssA/B-like protein 29 (hssl29) from Dictyostelium discoideum (Social amoeba).